Reading from the N-terminus, the 445-residue chain is Methionine aminopeptidase 2 (445 aa).

Residues 1 to 80 are disordered; that stretch reads MAAQVASGVG…TSKVQTEPPR (80 aa). A compositionally biased stretch (basic residues) spans 57–71; sequence AKKKKKKTKKKKKGT. Residue H195 participates in substrate binding. A divalent metal cation-binding residues include D215, D226, and H295. H303 lines the substrate pocket. The a divalent metal cation site is built by E331 and E426.

This sequence belongs to the peptidase M24A family. Methionine aminopeptidase eukaryotic type 2 subfamily. The cofactor is Co(2+). It depends on Zn(2+) as a cofactor. Mn(2+) is required as a cofactor. Requires Fe(2+) as cofactor.

The protein resides in the cytoplasm. It carries out the reaction Release of N-terminal amino acids, preferentially methionine, from peptides and arylamides.. Functionally, cotranslationally removes the N-terminal methionine from nascent proteins. The N-terminal methionine is often cleaved when the second residue in the primary sequence is small and uncharged (Met-Ala-, Cys, Gly, Pro, Ser, Thr, or Val). The polypeptide is Methionine aminopeptidase 2 (Paracoccidioides brasiliensis (strain Pb03)).